A 394-amino-acid chain; its full sequence is Obg-like ATPase 1 (394 aa).

One can recognise an OBG-type G domain in the interval 25–282 (LKIGIVGLPN…MAPDEAAKYC (258 aa)). ATP is bound by residues 34 to 39 (NVGKST), 56 to 60 (FCTIE), and 94 to 97 (DIAG). Residues Ser38 and Thr58 each coordinate Mg(2+). A GTP-binding site is contributed by Phe129. ATP is bound by residues 230-231 (NL), Leu231, and 263-265 (SGV). 263-265 (SGV) serves as a coordination point for GTP. In terms of domain architecture, TGS spans 303–386 (NLIYFFTAGP…QDGDIIFFKF (84 aa)).

Belongs to the TRAFAC class OBG-HflX-like GTPase superfamily. OBG GTPase family. YchF/OLA1 subfamily. In terms of assembly, monomer (Potential). Interacts with CAR4/GAP1. It depends on Mg(2+) as a cofactor.

Its subcellular location is the cytoplasm. The protein localises to the cytosol. Activated by GAP1. Its function is as follows. Hydrolyzes ATP, and can also hydrolyze GTP with lower efficiency. Has lower affinity for GTP (Potential). Exhibits GTPase activity. Confers sensitivity to salinity stress by suppressing the anti-oxidation enzymatic activities and increasing lipid peroxidation thus leading to the accumulation of reactive oxygen species (ROS). Acts as a negative regulator of disease resistance against bacterial pathogen. The chain is Obg-like ATPase 1 from Arabidopsis thaliana (Mouse-ear cress).